A 147-amino-acid polypeptide reads, in one-letter code: Mid1-interacting protein 1-B (147 aa).

The protein belongs to the SPOT14 family.

The protein resides in the nucleus. It localises to the cytoplasm. The protein localises to the cytoskeleton. Its function is as follows. Involved in stabilization of microtubules. May play a role in the regulation of lipogenesis. In Danio rerio (Zebrafish), this protein is Mid1-interacting protein 1-B.